Reading from the N-terminus, the 349-residue chain is Bifunctional nitrilase/nitrile hydratase NIT4A (349 aa).

One can recognise a CN hydrolase domain in the interval 29-301 (VRATVVQAST…EALISADLDL (273 aa)). The active-site Proton acceptor is the Glu69. Lys156 (proton donor) is an active-site residue. Cys190 serves as the catalytic Nucleophile.

Belongs to the carbon-nitrogen hydrolase superfamily. Nitrilase family. Expressed in roots, stems, cotyledons, leaves and flowers.

It localises to the cell membrane. It catalyses the reaction a nitrile + 2 H2O = a carboxylate + NH4(+). The enzyme catalyses 3-cyano-L-alanine + 2 H2O = L-aspartate + NH4(+). It carries out the reaction L-asparagine = 3-cyano-L-alanine + H2O. Functionally, highly specific for beta-cyano-L-alanine (Ala(CN)). Low activity with 3-phenylpropionitrile (PPN). Not associated with auxin production but may be involved in cyanide detoxification. The polypeptide is Bifunctional nitrilase/nitrile hydratase NIT4A (NIT4A) (Nicotiana tabacum (Common tobacco)).